The chain runs to 180 residues: SPbeta prophage-derived uncharacterized protein YosC (180 aa).

In Bacillus subtilis (strain 168), this protein is SPbeta prophage-derived uncharacterized protein YosC (yosC).